Consider the following 124-residue polypeptide: Small ribosomal subunit protein bS6 (124 aa).

Residues 105 to 115 are compositionally biased toward basic and acidic residues; the sequence is EVQHEEARKSA. The segment at 105-124 is disordered; that stretch reads EVQHEEARKSAQSDAPVAAA.

It belongs to the bacterial ribosomal protein bS6 family.

Its function is as follows. Binds together with bS18 to 16S ribosomal RNA. In Polynucleobacter necessarius subsp. necessarius (strain STIR1), this protein is Small ribosomal subunit protein bS6.